The sequence spans 102 residues: DET1- and DDB1-associated protein 1 (102 aa).

The disordered stretch occupies residues 67–102 (NAAKKRDQEQVEIEGENSAPPRKIARTDSQDMNEDT).

It belongs to the DDA1 family. In terms of assembly, component of numerous DCX (DDB1-CUL4-X-box) E3 ubiquitin-protein ligase complexes which consist of a core of DDB1, cullin-4 (CUL4A or CUL4B), DDA1 and RBX1.

It participates in protein modification; protein ubiquitination. Functions as a component of numerous distinct DCX (DDB1-CUL4-X-box) E3 ubiquitin-protein ligase complexes which mediate the ubiquitination and subsequent proteasomal degradation of target proteins. In the DCX complexes, acts as a scaffolding subunit required to stabilize the complex. The sequence is that of DET1- and DDB1-associated protein 1 from Gallus gallus (Chicken).